The chain runs to 531 residues: uncharacterized protein (531 aa).

Positions 1–22 are cleaved as a signal peptide; that stretch reads MRLQFKLLGFLTLLGTSTILSA. A lipid anchor (N-palmitoyl cysteine) is attached at C23. A lipid anchor (S-diacylglycerol cysteine) is attached at C23. The interval 31-51 is disordered; that stretch reads EPNNIEESGPITPTTPTTDVP. The segment covering 40–51 has biased composition (low complexity); it reads PITPTTPTTDVP.

The protein belongs to the MG067/MG068/MG395 family.

The protein resides in the cell membrane. This is an uncharacterized protein from Mycoplasma pneumoniae (strain ATCC 29342 / M129 / Subtype 1) (Mycoplasmoides pneumoniae).